The primary structure comprises 232 residues: Adenosylcobinamide-GDP ribazoletransferase (232 aa).

6 consecutive transmembrane segments (helical) span residues Leu-31–Leu-51, Val-59–Asp-79, Val-102–Leu-122, Pro-126–Phe-146, Leu-167–Ser-187, and Val-209–Leu-229.

This sequence belongs to the CobS family. The cofactor is Mg(2+).

The protein resides in the cell inner membrane. The enzyme catalyses alpha-ribazole + adenosylcob(III)inamide-GDP = adenosylcob(III)alamin + GMP + H(+). It catalyses the reaction alpha-ribazole 5'-phosphate + adenosylcob(III)inamide-GDP = adenosylcob(III)alamin 5'-phosphate + GMP + H(+). It participates in cofactor biosynthesis; adenosylcobalamin biosynthesis; adenosylcobalamin from cob(II)yrinate a,c-diamide: step 7/7. Its function is as follows. Joins adenosylcobinamide-GDP and alpha-ribazole to generate adenosylcobalamin (Ado-cobalamin). Also synthesizes adenosylcobalamin 5'-phosphate from adenosylcobinamide-GDP and alpha-ribazole 5'-phosphate. This Thermosipho africanus (strain TCF52B) protein is Adenosylcobinamide-GDP ribazoletransferase.